The following is a 466-amino-acid chain: Putative chitinase 2 (466 aa).

An N-terminal signal peptide occupies residues 1–17 (MYLTIWLVPLLAVGTWG). Residues 20–380 (FNRFCHYNSW…MAVIHGLNAY (361 aa)) form the GH18 domain. Cys-24 and Cys-49 are oxidised to a cystine. The active-site Proton donor is the Glu-141. Positions 395–447 (YNKKILRARVSLRNYRRRNQQGKVAEMEQRIRNLEQELQQSMGNMAYERQQAQ) form a coiled coil.

Belongs to the glycosyl hydrolase 18 family. As to expression, prismatic layer of shell (at protein level). Expressed primarily in the mantle with highest level in the mantle edge and lower level in the mantle pallium.

It localises to the secreted. It catalyses the reaction Random endo-hydrolysis of N-acetyl-beta-D-glucosaminide (1-&gt;4)-beta-linkages in chitin and chitodextrins.. The polypeptide is Putative chitinase 2 (Margaritifera margaritifera (Freshwater pearl mussel)).